Here is a 245-residue protein sequence, read N- to C-terminus: Eukaryotic translation initiation factor 6 (245 aa).

This sequence belongs to the eIF-6 family. Monomer. Associates with the 60S ribosomal subunit.

The protein resides in the cytoplasm. It is found in the nucleus. It localises to the nucleolus. In terms of biological role, binds to the 60S ribosomal subunit and prevents its association with the 40S ribosomal subunit to form the 80S initiation complex in the cytoplasm. May also be involved in ribosome biogenesis. This Ostreococcus lucimarinus (strain CCE9901) protein is Eukaryotic translation initiation factor 6.